The primary structure comprises 265 residues: Metallo-beta-lactamase VIM-7 (265 aa).

The signal sequence occupies residues Met1–Ala17. The Zn(2+) site is built by His113, His115, Asp117, His178, Cys197, and His239.

Belongs to the metallo-beta-lactamase superfamily. Class-B beta-lactamase family. As to quaternary structure, monomer. It depends on Zn(2+) as a cofactor.

The protein resides in the periplasm. The catalysed reaction is a beta-lactam + H2O = a substituted beta-amino acid. Class B beta-lactamase which confers resistance to the beta-lactam antibiotics, including penicillins, cephalosporins and carbapenems. Acts via hydrolysis of the beta-lactam ring. Has penicillin-, cephalosporin- and carbapenem-hydrolyzing activities. This Pseudomonas aeruginosa protein is Metallo-beta-lactamase VIM-7.